Reading from the N-terminus, the 163-residue chain is Pheromone-binding protein (163 aa).

Positions methionine 1–glutamine 22 are cleaved as a signal peptide. 3 disulfide bridges follow: cysteine 39-cysteine 74, cysteine 70-cysteine 129, and cysteine 117-cysteine 138.

Belongs to the PBP/GOBP family. Antenna.

This major soluble protein in olfactory sensilla of male moths might serve to solubilize the extremely hydrophobic pheromone molecules and to transport pheromone through the aqueous lymph to receptors located on olfactory cilia. The protein is Pheromone-binding protein of Heliothis virescens (Tobacco budworm moth).